A 218-amino-acid chain; its full sequence is MESASPSATIRRRGVMLVLSSPSGAGKSTIARSLLENDHEFELSVSVTTRPRRPSEIEGVHYHFKTQRDFEMMRDGGDLLEWAEVHGNCYGTPRGPVERAIAGGRDMLFDIDWQGAAQLREKMPDDIVSVFILPPTMKELLARLTRRAEDTPEIIERRLRNAHHEIEQWRDYDYVVINDDLDRAFASVRAIVSAERLRHERRPGLEDFVAGLLAERPE.

The Guanylate kinase-like domain occupies 14 to 193 (GVMLVLSSPS…AFASVRAIVS (180 aa)). An ATP-binding site is contributed by 21 to 28 (SPSGAGKS).

This sequence belongs to the guanylate kinase family.

The protein localises to the cytoplasm. It carries out the reaction GMP + ATP = GDP + ADP. Its function is as follows. Essential for recycling GMP and indirectly, cGMP. The chain is Guanylate kinase from Chelativorans sp. (strain BNC1).